Reading from the N-terminus, the 1066-residue chain is Ubiquitin conjugation factor E4 A (1066 aa).

Residues glutamine 35 to serine 57 are disordered. Lysine 386 carries the N6-acetyllysine modification. The U-box domain maps to aspartate 987–glutamine 1061.

It belongs to the ubiquitin conjugation factor E4 family.

Its subcellular location is the cytoplasm. The catalysed reaction is S-ubiquitinyl-[E2 ubiquitin-conjugating enzyme]-L-cysteine + [acceptor protein]-L-lysine = [E2 ubiquitin-conjugating enzyme]-L-cysteine + N(6)-ubiquitinyl-[acceptor protein]-L-lysine.. The protein operates within protein modification; protein ubiquitination. Functionally, ubiquitin-protein ligase that probably functions as an E3 ligase in conjunction with specific E1 and E2 ligases. May also function as an E4 ligase mediating the assembly of polyubiquitin chains on substrates ubiquitinated by another E3 ubiquitin ligase. Mediates 'Lys-48'-linked polyubiquitination of substrates. This chain is Ubiquitin conjugation factor E4 A, found in Rattus norvegicus (Rat).